The chain runs to 213 residues: Orotate phosphoribosyltransferase (213 aa).

K26 contributes to the 5-phospho-alpha-D-ribose 1-diphosphate binding site. 34–35 contributes to the orotate binding site; it reads FF. 5-phospho-alpha-D-ribose 1-diphosphate contacts are provided by residues 72 to 73, R99, K100, K103, H105, and 124 to 132; these read YK and DDVITAGTA. Orotate is bound by residues T128 and R156.

Belongs to the purine/pyrimidine phosphoribosyltransferase family. PyrE subfamily. As to quaternary structure, homodimer. Mg(2+) serves as cofactor.

The enzyme catalyses orotidine 5'-phosphate + diphosphate = orotate + 5-phospho-alpha-D-ribose 1-diphosphate. The protein operates within pyrimidine metabolism; UMP biosynthesis via de novo pathway; UMP from orotate: step 1/2. Its function is as follows. Catalyzes the transfer of a ribosyl phosphate group from 5-phosphoribose 1-diphosphate to orotate, leading to the formation of orotidine monophosphate (OMP). The sequence is that of Orotate phosphoribosyltransferase from Vibrio vulnificus (strain CMCP6).